We begin with the raw amino-acid sequence, 158 residues long: Class 10 plant pathogenesis-related protein 2B (158 aa).

Aspartate 8 contributes to the trans-zeatin binding site. Ca(2+) contacts are provided by proline 32, valine 35, and isoleucine 38. Glutamate 60, histidine 69, tyrosine 81, and tyrosine 83 together coordinate trans-zeatin. Residue tyrosine 83 participates in melatonin binding.

Belongs to the BetVI family.

The protein resides in the cytoplasm. The protein localises to the cytosol. Class II ribonuclease (RNase). Binds to several cytokinins including natural adenine-type (e.g. trans-zeatin and kinetin) and artificial urea-type (e.g. N,N'-diphenylurea and N-phenyl-N'-(2-chloro-4-pyridyl)urea) hormones. Interacts with melatonin. The chain is Class 10 plant pathogenesis-related protein 2B from Lupinus luteus (European yellow lupine).